A 429-amino-acid polypeptide reads, in one-letter code: Adenylosuccinate synthetase (429 aa).

GTP-binding positions include 12–18 (GDEGKGK) and 40–42 (GHT). Aspartate 13 (proton acceptor) is an active-site residue. Mg(2+) contacts are provided by aspartate 13 and glycine 40. IMP-binding positions include 13–16 (DEGK), 38–41 (NAGH), threonine 128, arginine 142, glutamine 223, threonine 238, and arginine 302. Catalysis depends on histidine 41, which acts as the Proton donor. 298-304 (TVTGRPR) contacts substrate. Residues arginine 304, 330 to 332 (LLD), and 412 to 414 (SVG) each bind GTP.

It belongs to the adenylosuccinate synthetase family. Homodimer. Mg(2+) serves as cofactor.

It localises to the cytoplasm. The enzyme catalyses IMP + L-aspartate + GTP = N(6)-(1,2-dicarboxyethyl)-AMP + GDP + phosphate + 2 H(+). It functions in the pathway purine metabolism; AMP biosynthesis via de novo pathway; AMP from IMP: step 1/2. Functionally, plays an important role in the de novo pathway of purine nucleotide biosynthesis. Catalyzes the first committed step in the biosynthesis of AMP from IMP. The sequence is that of Adenylosuccinate synthetase from Lactobacillus gasseri (strain ATCC 33323 / DSM 20243 / BCRC 14619 / CIP 102991 / JCM 1131 / KCTC 3163 / NCIMB 11718 / NCTC 13722 / AM63).